Reading from the N-terminus, the 429-residue chain is Phosphoribosylamine--glycine ligase (429 aa).

Residues 109–316 (KDFLARHQIP…LVDLCLAAID (208 aa)) enclose the ATP-grasp domain. An ATP-binding site is contributed by 135–196 (VREQGAPIVV…EEFLDGEEAS (62 aa)). The interval 212–235 (SQDHKRVGDKDTGPNTGGMGAYSP) is disordered. Residues 213–223 (QDHKRVGDKDT) show a composition bias toward basic and acidic residues. Positions 286 and 288 each coordinate Mg(2+).

Belongs to the GARS family. It depends on Mg(2+) as a cofactor. Mn(2+) is required as a cofactor.

It carries out the reaction 5-phospho-beta-D-ribosylamine + glycine + ATP = N(1)-(5-phospho-beta-D-ribosyl)glycinamide + ADP + phosphate + H(+). It functions in the pathway purine metabolism; IMP biosynthesis via de novo pathway; N(1)-(5-phospho-D-ribosyl)glycinamide from 5-phospho-alpha-D-ribose 1-diphosphate: step 2/2. This Vibrio parahaemolyticus serotype O3:K6 (strain RIMD 2210633) protein is Phosphoribosylamine--glycine ligase.